Reading from the N-terminus, the 123-residue chain is Large ribosomal subunit protein uL18 (123 aa).

This sequence belongs to the universal ribosomal protein uL18 family. As to quaternary structure, part of the 50S ribosomal subunit; part of the 5S rRNA/L5/L18/L25 subcomplex. Contacts the 5S and 23S rRNAs.

Its function is as follows. This is one of the proteins that bind and probably mediate the attachment of the 5S RNA into the large ribosomal subunit, where it forms part of the central protuberance. The sequence is that of Large ribosomal subunit protein uL18 from Wolbachia sp. subsp. Brugia malayi (strain TRS).